Consider the following 396-residue polypeptide: Phosphoglycerate kinase (396 aa).

Substrate-binding positions include Asp21 to Asn23, Arg36, His59 to Arg62, Arg118, and Arg151. ATP is bound by residues Lys201, Gly292, Glu323, and Gly349–Ser352.

The protein belongs to the phosphoglycerate kinase family. As to quaternary structure, monomer.

It is found in the cytoplasm. The enzyme catalyses (2R)-3-phosphoglycerate + ATP = (2R)-3-phospho-glyceroyl phosphate + ADP. The protein operates within carbohydrate degradation; glycolysis; pyruvate from D-glyceraldehyde 3-phosphate: step 2/5. This is Phosphoglycerate kinase from Leptospira borgpetersenii serovar Hardjo-bovis (strain L550).